A 42-amino-acid polypeptide reads, in one-letter code: Photosystem II reaction center protein J (42 aa).

Residues 10-30 traverse the membrane as a helical segment; sequence IPLWLVGTVAGTAALTLVAVF.

It belongs to the PsbJ family. PSII is composed of 1 copy each of membrane proteins PsbA, PsbB, PsbC, PsbD, PsbE, PsbF, PsbH, PsbI, PsbJ, PsbK, PsbL, PsbM, PsbT, PsbX, PsbY, PsbZ, Psb30/Ycf12, at least 3 peripheral proteins of the oxygen-evolving complex and a large number of cofactors. It forms dimeric complexes.

It is found in the plastid. The protein localises to the chloroplast thylakoid membrane. Functionally, one of the components of the core complex of photosystem II (PSII). PSII is a light-driven water:plastoquinone oxidoreductase that uses light energy to abstract electrons from H(2)O, generating O(2) and a proton gradient subsequently used for ATP formation. It consists of a core antenna complex that captures photons, and an electron transfer chain that converts photonic excitation into a charge separation. The protein is Photosystem II reaction center protein J of Chlorella vulgaris (Green alga).